The primary structure comprises 159 residues: Phosphopantetheine adenylyltransferase (159 aa).

Thr-9 is a binding site for substrate. Residues 9 to 10 (TF) and His-17 contribute to the ATP site. Residues Lys-41, Leu-73, and Arg-87 each contribute to the substrate site. ATP contacts are provided by residues 88–90 (GLR), Glu-98, and 123–129 (YSYISST).

It belongs to the bacterial CoaD family. Homohexamer. Mg(2+) serves as cofactor.

The protein localises to the cytoplasm. The enzyme catalyses (R)-4'-phosphopantetheine + ATP + H(+) = 3'-dephospho-CoA + diphosphate. Its pathway is cofactor biosynthesis; coenzyme A biosynthesis; CoA from (R)-pantothenate: step 4/5. In terms of biological role, reversibly transfers an adenylyl group from ATP to 4'-phosphopantetheine, yielding dephospho-CoA (dPCoA) and pyrophosphate. The chain is Phosphopantetheine adenylyltransferase from Azotobacter vinelandii (strain DJ / ATCC BAA-1303).